Consider the following 407-residue polypeptide: Sensor histidine kinase YdfH (407 aa).

At 1 to 25 (MLIRNPFKDKYYSHDRRALNMLALR) the chain is on the cytoplasmic side. 2 consecutive transmembrane segments (helical) span residues 26 to 46 (VPGL…QFVS) and 47 to 67 (GGWS…FALL). Residues 68 to 78 (HWHSYRWVKKR) are Cytoplasmic-facing. 2 helical membrane-spanning segments follow: residues 79–99 (VILY…LMTG) and 100–120 (FFIL…IGMA). Topologically, residues 121 to 125 (DRRRT) are cytoplasmic. The chain crosses the membrane as a helical span at residues 126 to 146 (FLILYLLLLLVINSAYHLHKG). Residues 147 to 150 (EVLH) are Extracellular-facing. The helical transmembrane segment at 151-171 (FIVIAAPIMIVIITYAATFFA) threads the bilayer. Residues 172 to 407 (QVDEKIKAQL…VPIQGEMQDE (236 aa)) lie on the Cytoplasmic side of the membrane. Residues 201–402 (ERQRMARDLH…QIEITVPIQG (202 aa)) form the Histidine kinase domain. His210 is modified (phosphohistidine; by autocatalysis).

It is found in the cell membrane. The catalysed reaction is ATP + protein L-histidine = ADP + protein N-phospho-L-histidine.. Its function is as follows. Member of the two-component regulatory system YdfH/YdfI. May activate YdfI by phosphorylation. This chain is Sensor histidine kinase YdfH (ydfH), found in Bacillus subtilis (strain 168).